Reading from the N-terminus, the 482-residue chain is Wax ester synthase/diacylglycerol acyltransferase 9 (482 aa).

The Cytoplasmic segment spans residues 1–195 (MEKKMKEEEE…FRLVLVVCST (195 aa)). His-140 acts as the Proton acceptor in catalysis. A helical membrane pass occupies residues 196-216 (VRLIWNTLVDSFLCMATIFFL). At 217–328 (KDTDTPLKGK…AKGSKCRWGN (112 aa)) the chain is on the lumenal side. Residues 329 to 349 (YISVILFPFTIALQSDPLVYL) traverse the membrane as a helical segment. Topologically, residues 350–366 (SNVKSMIDRKKNSLITY) are cytoplasmic. Residues 367 to 387 (IIYTFSEFVIKAFGINVAVAF) traverse the membrane as a helical segment. The Lumenal portion of the chain corresponds to 388-482 (QRKIMLNTTM…LEKGLPNHVN (95 aa)). N-linked (GlcNAc...) asparagine glycosylation is present at Asn-394.

The protein in the N-terminal section; belongs to the long-chain O-acyltransferase family. Mostly expressed in stems and siliques.

The protein localises to the cell membrane. The protein resides in the endoplasmic reticulum membrane. The catalysed reaction is an acyl-CoA + a 1,2-diacyl-sn-glycerol = a triacyl-sn-glycerol + CoA. It catalyses the reaction a long chain fatty alcohol + a fatty acyl-CoA = a wax ester + CoA. It participates in glycerolipid metabolism; triacylglycerol biosynthesis. The protein operates within lipid metabolism. Functionally, bifunctional wax ester synthase/diacylglycerol acyltransferase. Involved in cuticular wax biosynthesis. The protein is Wax ester synthase/diacylglycerol acyltransferase 9 of Arabidopsis thaliana (Mouse-ear cress).